Consider the following 348-residue polypeptide: Protein RecA (348 aa).

67–74 (GPESSGKT) is a binding site for ATP.

This sequence belongs to the RecA family.

It is found in the cytoplasm. Its function is as follows. Can catalyze the hydrolysis of ATP in the presence of single-stranded DNA, the ATP-dependent uptake of single-stranded DNA by duplex DNA, and the ATP-dependent hybridization of homologous single-stranded DNAs. It interacts with LexA causing its activation and leading to its autocatalytic cleavage. This is Protein RecA from Salinispora tropica (strain ATCC BAA-916 / DSM 44818 / JCM 13857 / NBRC 105044 / CNB-440).